Reading from the N-terminus, the 1150-residue chain is Pyruvate carboxylase (1150 aa).

The region spanning 3–455 (QIKKLLVANR…TTKFIEETPE (453 aa)) is the Biotin carboxylation domain. Residues Lys119, Lys161, His211, and Glu278 each contribute to the ATP site. The region spanning 123–319 (RTTAIKADLP…IVKTQILVAA (197 aa)) is the ATP-grasp domain. Arg294 is an active-site residue. Residues 533 to 802 (VLLTDTTFRD…HLRTDIEGME (270 aa)) form the Pyruvate carboxyltransferase domain. 541 to 545 (RDAHQ) lines the substrate pocket. Residues Asp542, Lys712, His741, and His743 each contribute to the Mn(2+) site. Position 712 is an N6-carboxylysine (Lys712). The 76-residue stretch at 1071-1146 (KADKSNPSHI…ATGDLLIEIE (76 aa)) folds into the Biotinyl-binding domain. The residue at position 1112 (Lys1112) is an N6-biotinyllysine.

Homotetramer. Biotin serves as cofactor.

The enzyme catalyses hydrogencarbonate + pyruvate + ATP = oxaloacetate + ADP + phosphate + H(+). Catalyzes a 2-step reaction, involving the ATP-dependent carboxylation of the covalently attached biotin in the first step and the transfer of the carboxyl group to pyruvate in the second. In Staphylococcus aureus (strain Mu50 / ATCC 700699), this protein is Pyruvate carboxylase (pycA).